Here is an 818-residue protein sequence, read N- to C-terminus: MKPIPSPEPPGQLRLTPRRKDKGEAEWERHRTRERLEATLAGLAELDCLRHRQQLLVQNVLSPGTHGQDAAPTGDSPRSDEQKLLEENISLLKKQLNCLRKRDAGLLSQLHELDKQINDLKIDSEKTEETDSRPSSGFYELSDGTSGSLSNSSNSVFSECLSSCHSSTCFCNPLETSLNLTDGQAKSAEDFLEWLDYRESQHETGTVRCSFSAPHSNSVEVTADVHPKYQCDLVSKNGNDVYRYPSPLHAVAVQSPMFLISVMGNIKAEEPEEEIGPNDNDDCIVPELDHLKDEDSFLHQSSLCSLPLSSGKKMDGYILSIIHKKAHPVRTNKPRTSVNADPGKGILRHGSICVKQTVGVSQSNAVNLKNSKQTCLHSAGMISVDNSTYPSLKPCSKESLSEQLESKRMPSISTYPSCNVNELQSQNNSRNTVKSVCQGLARGSVAMTSNVQKENVTPNAPANLPNASSSVCNGSPRESTQNSALLPQEIKVVPPVKRVSLKNTLLSYHESSSFEERPPLDFKSEGSSSQSLDEGMLVNAHYIPAQQHGVKLHKNTKNVKIVKSSTLKHRADVQYVLENGSQTLKEKSKVVGKKCRFPEDLDTNKKVKKSTPRVKKIVHPHFEPAAVGRNPVAVRSGIKSHGHPKDVVLAKPKHKRSDYRRWKSSAEISYEEALRRARRRVQREMMGVCAQVPFSHASPYAYIASDSEYSAECESLFHSTVVDTSEDEQSNYTTNCFGDSESSLSEVEFVGESTTSSDTDESGGLIWSQFVHTLPMQATATAELQTTAKAFIKIKASHNLKKKILRFRSGSLKLMTTV.

The segment covering 1 to 10 (MKPIPSPEPP) has biased composition (pro residues). 5 disordered regions span residues 1–30 (MKPI…WERH), 60–80 (VLSP…PRSD), 122–144 (IDSE…LSDG), 455–486 (NVTP…SALL), and 510–530 (ESSS…SSSQ). Positions 1-337 (MKPIPSPEPP…PVRTNKPRTS (337 aa)) are interaction with tcf7l1-A. Residues 21-30 (DKGEAEWERH) show a composition bias toward basic and acidic residues. Residues 79–130 (SDEQKLLEENISLLKKQLNCLRKRDAGLLSQLHELDKQINDLKIDSEKTEET) are a coiled coil. Residues 122–132 (IDSEKTEETDS) are compositionally biased toward basic and acidic residues. A compositionally biased stretch (polar residues) spans 455–485 (NVTPNAPANLPNASSSVCNGSPRESTQNSAL). Residues 512–524 (SSFEERPPLDFKS) show a composition bias toward basic and acidic residues. The PDZ-binding signature appears at 815–818 (MTTV).

This sequence belongs to the dapper family. As to quaternary structure, interacts with dbf4 and tcf7l1-A. Interacts with dvl2/dsh via the C-terminus. In terms of tissue distribution, expressed in the animal and dorsal marginal regions at late blastula and early gastrula stages. Expressed predominantly in the anterior neural plate at neurulation. Expressed mainly in the ectodermal placodes, including the eye anlagen and the otic vesicle, at later stages of development.

The protein localises to the cytoplasm. The protein resides in the nucleus. Its function is as follows. Involved in regulation of intracellular signaling pathways during development. Specifically thought to play a role in canonical and/or non-canonical Wnt signaling pathways through interaction with DSH (Dishevelled) family proteins. Binds to dvl2/dsh and impedes the degradation of beta-catenin (ctnnb1-A and possibly ctnnb1-B), thereby enhancing the transcriptional activation of target genes of the Wnt signaling pathway. Also promotes catenin delta/ctnnd1 stability which in turn promotes zbtb33/kaiso sequestration and thus is involved in the regulation of zbtb33/kaiso-mediated transcriptional repression. May also bind to and directly stimulate the transcriptional activity of tcf7l1-A. Required for eye development and neural patterning. This chain is Dapper 1-A (dact1-a), found in Xenopus laevis (African clawed frog).